The following is a 245-amino-acid chain: MPRYKLTIEYDGTPYAGWQIQADQQTVQGALAQAFKRFCGEDVHVAGAGRTDAGVHATGQVAHVDLSRHWRSDTVRDAMTAQLRPHPIAVLSAEEVPDSFDARFSATKRHYLYRIINRRPDLALDRDRAWRIPQKLDAQAMHEAAQRLLGKHDFSTFRAAECQAASPLKTLDQLDVSRSGDEIRVITSARSFLHHQVRSMVGSLMRVGEGRWSADDLEAALKAADRTRCGPMAPAAGLYLAAVSY.

Asp-52 (nucleophile) is an active-site residue. Substrate is bound at residue Tyr-111.

Belongs to the tRNA pseudouridine synthase TruA family. Homodimer.

It carries out the reaction uridine(38/39/40) in tRNA = pseudouridine(38/39/40) in tRNA. Functionally, formation of pseudouridine at positions 38, 39 and 40 in the anticodon stem and loop of transfer RNAs. The chain is tRNA pseudouridine synthase A from Xanthobacter autotrophicus (strain ATCC BAA-1158 / Py2).